The primary structure comprises 799 residues: Cadherin-8 (799 aa).

The first 29 residues, 1-29 (MPERLAETLMDLWTPLIILWITLPSCVYT), serve as a signal peptide directing secretion. Positions 30 to 61 (APMNQAHVLTTGSPLELSRQSEDMRILSRSKR) are excised as a propeptide. Cadherin domains follow at residues 62–167 (GWVW…APEF), 168–276 (LNGP…PPKF), 277–391 (AQSL…PPVF), 392–494 (SSPT…DNAP), and 495–616 (EFAS…YVLP). At 62-621 (GWVWNQMFVL…AYVLPIGLSM (560 aa)) the chain is on the extracellular side. N-linked (GlcNAc...) asparagine glycosylation occurs at asparagine 188. N-linked (GlcNAc...) asparagine glycans are attached at residues asparagine 463, asparagine 473, and asparagine 544. Residues 622 to 642 (GALIAILACIILLLVIVVLFV) traverse the membrane as a helical segment. The Cytoplasmic portion of the chain corresponds to 643–799 (TLRRHKNEPL…YSVGESDKET (157 aa)). The residue at position 795 (serine 795) is a Phosphoserine.

It localises to the cell membrane. Cadherins are calcium-dependent cell adhesion proteins. They preferentially interact with themselves in a homophilic manner in connecting cells; cadherins may thus contribute to the sorting of heterogeneous cell types. The sequence is that of Cadherin-8 (Cdh8) from Mus musculus (Mouse).